Reading from the N-terminus, the 759-residue chain is LIM domain and actin-binding protein 1 (759 aa).

An N-acetylmethionine modification is found at Met1. A phosphoserine mark is found at Ser4, Ser15, and Ser55. A disordered region spans residues 78 to 131 (NPGLGAESHTDSLRNSSTEIRHRADHPPAEVTSHAASGAKADQEEQIHPRSRLR). Over residues 96–105 (EIRHRADHPP) the composition is skewed to basic and acidic residues. Ser132 carries the phosphoserine modification. Residues 146–177 (KDGEDLKDHSTESKKMENCLGESRHEVEKSEI) are compositionally biased toward basic and acidic residues. The segment at 146 to 182 (KDGEDLKDHSTESKKMENCLGESRHEVEKSEISENTD) is disordered. The short motif at 164–166 (CLG) is the Required for interaction with NPC1L1 element. Ala183 and Ser225 each carry phosphoserine. 2 disordered regions span residues 211-264 (ILRA…RLSE) and 323-381 (EKIS…AMKK). At Tyr229 the chain carries Phosphotyrosine. A phosphoserine mark is found at Ser230 and Ser242. Over residues 247–258 (DSEKNESRRNLE) the composition is skewed to basic and acidic residues. Phosphoserine is present on residues Ser263, Ser343, Ser350, Ser362, Ser365, Ser369, and Ser374. Positions 362-376 (SPDSRASSLSESSPP) are enriched in low complexity. Residues 388–448 (ETCVECQKTV…KPHFNQLFKS (61 aa)) enclose the LIM zinc-binding domain. Lys439 bears the N6-succinyllysine mark. At Ser490 the chain carries Phosphoserine. The interval 493 to 513 (VEDAPIAKVGVLAASMEAKAS) is required for interaction with MYO5B. The disordered stretch occupies residues 509–709 (EAKASSQQEK…QEPKSLNWSS (201 aa)). Composition is skewed to basic and acidic residues over residues 516 to 527 (QEKEDKPAETKK) and 556 to 567 (WPPEDEISKPEV). Residues 595–607 (ASFQSTSVKSPKT) show a composition bias toward polar residues. Residues Ser601, Ser604, Ser609, and Ser617 each carry the phosphoserine modification. Over residues 644-655 (KNGNVGKTTWQN) the composition is skewed to polar residues. Residues 656 to 673 (KESKGETGKRSKEGHSLE) show a composition bias toward basic and acidic residues. Residues 674–691 (MENENLVENGADSDEDDN) show a composition bias toward acidic residues. Residues Ser686, Ser692, Ser698, Ser726, and Ser741 each carry the phosphoserine modification. Positions 693–709 (FLKQQSPQEPKSLNWSS) are enriched in polar residues.

In terms of assembly, interacts with NPC1L1; bridges NPC1L1 with MYO5B. Interacts with MYO5B; bridges NPC1L1 with MYO5B. Interacts with PXN; this complex stabilizes actin dynamics. Interacts with F-actin and G-actin. Interacts with LUZP1 (via C-terminus); both proteins restrict ciliation and may work together to regulate this process. Binds RAB40B (GTP-bound); interaction influences LIMA1 subcellular localization in lamellipodia during cell migration. In terms of processing, ubiquitinated by the ECS(RAB40B) complex leading to its degradation. Post-translationally, phosphorylation of the C-terminal region by MAPK1/MAPK3 reduces its association with F-actin and contributes to actin filament reorganization and enhances cell motility. As to expression, highly expressed in placenta, kidney, pancreas, prostate, ovary, spleen and heart. Also detected in lung, liver, brain, skeletal muscle, thymus, testis and intestine. Not detected in leukocytes. Isoform Beta expressed generally at very low levels. Isoform Alpha abundant in epithelial cells from mammary gland, prostate and in normal oral keratinocytes. Low levels in aortic endothelial cells and dermal fibroblasts. Not detectable in myocardium.

It localises to the cytoplasm. Its subcellular location is the cell junction. It is found in the focal adhesion. The protein resides in the cytoskeleton. The protein localises to the stress fiber. It localises to the cell membrane. Its subcellular location is the cell projection. It is found in the ruffle. The protein resides in the lamellipodium. In terms of biological role, actin-binding protein involved in actin cytoskeleton regulation and dynamics. Increases the number and size of actin stress fibers and inhibits membrane ruffling. Inhibits actin filament depolymerization. Bundles actin filaments, delays filament nucleation and reduces formation of branched filaments. Acts as a negative regulator of primary cilium formation. Plays a role in cholesterol homeostasis. Influences plasma cholesterol levels through regulation of intestinal cholesterol absorption. May act as a scaffold protein by regulating NPC1L1 transportation, an essential protein for cholesterol absorption, to the plasma membrane by recruiting MYO5B to NPC1L1, and thus facilitates cholesterol uptake. In Homo sapiens (Human), this protein is LIM domain and actin-binding protein 1.